The primary structure comprises 304 residues: Glycine--tRNA ligase alpha subunit (304 aa).

It belongs to the class-II aminoacyl-tRNA synthetase family. In terms of assembly, tetramer of two alpha and two beta subunits.

The protein resides in the cytoplasm. The catalysed reaction is tRNA(Gly) + glycine + ATP = glycyl-tRNA(Gly) + AMP + diphosphate. The protein is Glycine--tRNA ligase alpha subunit of Pectobacterium atrosepticum (strain SCRI 1043 / ATCC BAA-672) (Erwinia carotovora subsp. atroseptica).